We begin with the raw amino-acid sequence, 238 residues long: RxLR effector protein PITG_14788 (238 aa).

An N-terminal signal peptide occupies residues 1 to 23 (MKSLHAVNLVLLLLLACFAPAPA). Residues 47–65 (RLLRAHSSGKEEQKEEEER) carry the RxLR-dEER motif.

This sequence belongs to the RxLR effector family.

The protein localises to the secreted. It localises to the host cytoplasm. It is found in the host cytoskeleton. The protein resides in the host nucleus. Its subcellular location is the host nucleolus. Its function is as follows. Effector that enhances P.infestans colonization of Nicotiana benthamiana leaves. The polypeptide is RxLR effector protein PITG_14788 (Phytophthora infestans (strain T30-4) (Potato late blight agent)).